We begin with the raw amino-acid sequence, 1327 residues long: Myb-like protein O (1327 aa).

Over residues 131–142 the composition is skewed to low complexity; it reads NNNINTTNNNNK. 4 disordered regions span residues 131–153, 263–390, 504–668, and 717–770; these read NNNINTTNNNNKTNERQNNEESN, EEED…DESS, PPQQ…NHES, and KKKK…DNDD. Over residues 263–283 the composition is skewed to acidic residues; the sequence is EEEDDEDYIPPEEEEDDDEDN. Over residues 322–353 the composition is skewed to low complexity; that stretch reads YNNTANNINNNNIGDESDNNNNNNNNINNNSN. Over residues 356–374 the composition is skewed to acidic residues; it reads DDDDDDDDDNNDDDDDDND. The segment covering 511 to 532 has biased composition (low complexity); it reads SSSSINSSNTMSSSSSSSSLSK. Residues 533–542 are compositionally biased toward basic residues; that stretch reads NKLKKKKKEE. The segment covering 543-554 has biased composition (basic and acidic residues); that stretch reads KRKEEKRKEEKR. Basic residues predominate over residues 555–577; it reads KEKKRKKRQSITISKFKKNKKKT. Positions 585–606 are enriched in acidic residues; that stretch reads SESDSSSDDSDDSDFYYSDIEE. Residues 607-619 show a composition bias toward gly residues; sequence GGGGNGNGSGSGV. Positions 624 to 633 are enriched in acidic residues; it reads SDNEEGDSSS. 2 stretches are compositionally biased toward low complexity: residues 646–668 and 722–732; these read HTNNSNNSIENNNNNNNNNNHES and QSSSSSSSSTI. Residues 754–770 are compositionally biased toward acidic residues; that stretch reads NDDEDDNNNNNEDDNDD. An HTH myb-type domain is found at 897–953; that stretch reads NVKLNQLKFTGGEDLLLLMGVKRFGTFNWRIIQKRYFPNKTDDQLFHRYKNLLSHSS. Residues 925 to 949 constitute a DNA-binding region (H-T-H motif); it reads WRIIQKRYFPNKTDDQLFHRYKNLL. The Myb-like 1 domain maps to 959 to 1010; that stretch reads KQYLNGAKFTKEEEEKLDGAIKIHGLKWDIISRDYLHWKEPAMLKKFYEKRE. Composition is skewed to low complexity over residues 1061 to 1118 and 1144 to 1160; these read NSTN…NENN and PIIENNSSTSTTRETSP. 2 disordered regions span residues 1061–1122 and 1144–1168; these read NSTN…YEFG and PIIENNSSTSTTRETSPVQMNPCPI. Residues 1268–1316 form the Myb-like 2 domain; the sequence is KWTREEDRIILITVKEKGTVDNEIWKSLSDTKIQDKTPDQIMYRYLQLL.

The protein resides in the nucleus. The sequence is that of Myb-like protein O (mybO) from Dictyostelium discoideum (Social amoeba).